Here is a 708-residue protein sequence, read N- to C-terminus: Protein SUPPRESSOR OF MAX2 1A (708 aa).

Positions 248–283 (QMASKPQEKAASPPGSPVRTDLVLGPKQTETTPEKT) are disordered. An EAR motif is present at residues 537-541 (FDLNE).

The protein belongs to the ClpA/ClpB family.

In terms of biological role, probable component of a transcriptional corepressor complex that acts downstream of MAX2 to negatively regulate karrikins/strigolactone responses. Involved in the (-)-germacrene D signaling pathway influencing plant fitness and occurring in the stigma in a KAI2IA-dependent manner. The protein is Protein SUPPRESSOR OF MAX2 1A of Petunia hybrida (Petunia).